Consider the following 112-residue polypeptide: Nucleoid-associated protein BCI_0116 (112 aa).

It belongs to the YbaB/EbfC family. Homodimer.

It localises to the cytoplasm. The protein localises to the nucleoid. Binds to DNA and alters its conformation. May be involved in regulation of gene expression, nucleoid organization and DNA protection. This chain is Nucleoid-associated protein BCI_0116, found in Baumannia cicadellinicola subsp. Homalodisca coagulata.